The primary structure comprises 150 residues: Meiotic expression up-regulated protein 15 (150 aa).

This Schizosaccharomyces pombe (strain 972 / ATCC 24843) (Fission yeast) protein is Meiotic expression up-regulated protein 15 (meu15).